The following is an 823-amino-acid chain: Lon protease (823 aa).

A Lon N-terminal domain is found at 51-246 (IPILPLRNMV…RLLFILNREY (196 aa)). 397 to 404 (GPPGVGKT) contacts ATP. Positions 633–815 (NDYAGVVTGL…QQVVDLALLR (183 aa)) constitute a Lon proteolytic domain. Active-site residues include S721 and K764.

This sequence belongs to the peptidase S16 family. Homohexamer. Organized in a ring with a central cavity.

It is found in the cytoplasm. It catalyses the reaction Hydrolysis of proteins in presence of ATP.. ATP-dependent serine protease that mediates the selective degradation of mutant and abnormal proteins as well as certain short-lived regulatory proteins. Required for cellular homeostasis and for survival from DNA damage and developmental changes induced by stress. Degrades polypeptides processively to yield small peptide fragments that are 5 to 10 amino acids long. Binds to DNA in a double-stranded, site-specific manner. This chain is Lon protease, found in Parabacteroides distasonis (strain ATCC 8503 / DSM 20701 / CIP 104284 / JCM 5825 / NCTC 11152).